An 852-amino-acid chain; its full sequence is Taste receptor type 1 member 3 (852 aa).

Positions 1–20 are cleaved as a signal peptide; that stretch reads MLGPAVLGLSLWALLQPGAG. Over 21-570 the chain is Extracellular; it reads APLCLSQQLR…FLAWGEPAVL (550 aa). Residues asparagine 85, asparagine 130, asparagine 264, asparagine 285, asparagine 380, asparagine 411, asparagine 432, and asparagine 475 are each glycosylated (N-linked (GlcNAc...) asparagine). The helical transmembrane segment at 571–591 threads the bilayer; the sequence is LLLLLLSLALGLVLAALGLFV. At 592–603 the chain is on the cytoplasmic side; the sequence is HHRDSPLVQASG. The chain crosses the membrane as a helical span at residues 604 to 624; that stretch reads GPLACFGLVCLGLVCLSVLLF. The Extracellular segment spans residues 625 to 639; sequence PGQPSPAQCLAQQPL. A helical transmembrane segment spans residues 640 to 660; it reads SHLPLTGCLSTLFLQAAEIFV. Residues 661-682 are Cytoplasmic-facing; it reads ESELPLSWADRLSGCLRGPWAW. Residues 683-703 traverse the membrane as a helical segment; sequence LVVLLAMLVEVALCTWYLVAF. The Extracellular portion of the chain corresponds to 704–729; the sequence is PPEVVTDWHMLPTEALVHCRTRSWVS. A helical transmembrane segment spans residues 730 to 750; it reads FGLAHATNATLAFLCFLGTFL. Over 751–762 the chain is Cytoplasmic; that stretch reads VRSQPGRYNRAR. Residues 763–783 form a helical membrane-spanning segment; that stretch reads GLTFAMLAYFITWVSFVPLLA. Topologically, residues 784-791 are extracellular; it reads NVQVVLRP. Residues 792-812 form a helical membrane-spanning segment; the sequence is AVQMGALLLCVLGILAAFHLP. At 813-852 the chain is on the cytoplasmic side; sequence RCYLLIRQPGLNTPEFFLGGGPGDAQGRNDGDTGNQGKHE. A disordered region spans residues 833–852; it reads GPGDAQGRNDGDTGNQGKHE. Basic and acidic residues predominate over residues 839–852; that stretch reads GRNDGDTGNQGKHE.

It belongs to the G-protein coupled receptor 3 family. TAS1R subfamily. Forms homodimers or heterodimers with TAS1R1 and TAS1R2.

It localises to the cell membrane. In terms of biological role, putative taste receptor. TAS1R1/TAS1R3 responds to the umami taste stimulus (the taste of monosodium glutamate). TAS1R2/TAS1R3 recognizes diverse natural and synthetic sweeteners. TAS1R3 is essential for the recognition and response to the disaccharide trehalose. Sequence differences within and between species can significantly influence the selectivity and specificity of taste responses. The protein is Taste receptor type 1 member 3 (TAS1R3) of Gorilla gorilla gorilla (Western lowland gorilla).